We begin with the raw amino-acid sequence, 466 residues long: Cytochrome c-552 (466 aa).

The signal sequence occupies residues 1-27; the sequence is MVRILTKKSFALSALVAASLMASGAMA. A heme c-binding site is contributed by His87. Residues Cys115, Cys118, and Lys119 each contribute to the heme site. Heme c-binding residues include Cys153, Cys156, His157, Cys195, Cys198, and His199. Residues Glu201, Tyr202, Lys250, and Gln252 each contribute to the Ca(2+) site. Tyr202 is a substrate binding site. His253 lines the substrate pocket. Residues His264, Cys271, Cys274, His275, His290, Cys303, Cys306, His307, and His382 each coordinate heme c.

Belongs to the cytochrome c-552 family. The cofactor is Ca(2+). It depends on heme c as a cofactor.

The protein resides in the periplasm. The enzyme catalyses 6 Fe(III)-[cytochrome c] + NH4(+) + 2 H2O = 6 Fe(II)-[cytochrome c] + nitrite + 8 H(+). It participates in nitrogen metabolism; nitrate reduction (assimilation). Its function is as follows. Catalyzes the reduction of nitrite to ammonia, consuming six electrons in the process. This Shewanella woodyi (strain ATCC 51908 / MS32) protein is Cytochrome c-552.